The chain runs to 229 residues: All-trans retinoic acid-induced differentiation factor (229 aa).

An N-terminal signal peptide occupies residues 1–30 (MAPHDPGSLTTLVPWAAALLLALGVERALA). The Extracellular segment spans residues 31–199 (LPEICTQCPG…YKCMRQGSFS (169 aa)). N44, N79, N157, and N168 each carry an N-linked (GlcNAc...) asparagine glycan. An EGF-like domain is found at 152–193 (QKNLCNNTGDPEMCPENGSCVPDGPGLLQCVCADGFHGYKCM). 3 disulfide bridges follow: C156-C171, C165-C181, and C183-C192. The helical transmembrane segment at 200 to 220 (LLMFFGILGATTLSVSILLWA) threads the bilayer. Over 221-229 (TQRRKAKTS) the chain is Cytoplasmic.

As to quaternary structure, interacts with NELL1; the interaction promotes osteoblastic differentiation and mineralization. Interacts with SLC37A3; the interaction is direct and both proteins are mutually dependent for their stability. In terms of tissue distribution, weakly expressed in hematopoietic cell lines.

It is found in the nucleus envelope. Its subcellular location is the cell membrane. The protein resides in the lysosome membrane. Functionally, promotes osteoblast cell differentiation and terminal mineralization. Plays a role in inducing the cell cycle arrest via inhibiting CCND1 expression in all-trans-retinoic acid (ATRA) signal pathway. In osteoclasts, forms a transporter complex with ATRAID for nitrogen-containing-bisphophonates (N-BPs) required for releasing N-BP molecules that have trafficked to lysosomes through fluid-phase endocytosis into the cytosol. In Homo sapiens (Human), this protein is All-trans retinoic acid-induced differentiation factor.